The primary structure comprises 300 residues: Putative hydro-lyase Dshi_3152 (300 aa).

It belongs to the D-glutamate cyclase family.

The sequence is that of Putative hydro-lyase Dshi_3152 from Dinoroseobacter shibae (strain DSM 16493 / NCIMB 14021 / DFL 12).